The following is a 73-amino-acid chain: Cytochrome b559 subunit alpha (73 aa).

Residues 21-35 form a helical membrane-spanning segment; that stretch reads IIHSITVPSLFIAGW. His23 provides a ligand contact to heme.

Belongs to the PsbE/PsbF family. As to quaternary structure, heterodimer of an alpha subunit and a beta subunit. PSII is composed of 1 copy each of membrane proteins PsbA, PsbB, PsbC, PsbD, PsbE, PsbF, PsbH, PsbI, PsbJ, PsbK, PsbL, PsbM, PsbT, PsbY, PsbZ, Psb30/Ycf12, at least 3 peripheral proteins of the oxygen-evolving complex and a large number of cofactors. It forms dimeric complexes. Heme b is required as a cofactor.

It localises to the plastid. The protein resides in the chloroplast thylakoid membrane. Its function is as follows. This b-type cytochrome is tightly associated with the reaction center of photosystem II (PSII). PSII is a light-driven water:plastoquinone oxidoreductase that uses light energy to abstract electrons from H(2)O, generating O(2) and a proton gradient subsequently used for ATP formation. It consists of a core antenna complex that captures photons, and an electron transfer chain that converts photonic excitation into a charge separation. This chain is Cytochrome b559 subunit alpha, found in Bigelowiella natans (Pedinomonas minutissima).